The primary structure comprises 571 residues: MRASRFLFATLRETPNDAEVISHQLMLRAGMIRKLASGLYTWLPMGTRVLKKVDAIVREEMNRSGAMEVFMPVTQPASLWEESGRYEQYGPELLRFKDRHDNPFVLGPTHEEVITDLARNELKSYKQLPVNFYQIQTKFRDEIRPRFGVMRSREFIMKDAYSFHATQESLQETYDVMYDTYSRIFTRLGLDFRPVQADTGSIGGSASHEFHVLAASGEDDIAFSTESDYAANVEMAEAVLVGERAAPTQEFKLVETPNQKTIADVCQFLNADPKQSVKALLVQGVADEKGNVPVVALFLRGDHELNEIKAEKHPLVAAPLAFATEEQLQAFGLTAGFTGPQGLVEKGITVIVDRAASVLSDFVAGANEADKHAVGVNWERDAQITEVFDLRNVVEGDPSPDGKGTLQIKRGIEVGHIFQLGTKYSEALGCKVLGEDGKPFTVTMGCYGIGVTRVVAAAIEQNYDDKGIIWPQAIAPFEIAIVPMNAHKSPRTLEAAEALYAELQAQGFDVLLDDRNERPGVKFSDLELMGIPHRIVIGEKGLDAGTFEYKGRRDAEASNLTKEELLAKLAR.

The protein belongs to the class-II aminoacyl-tRNA synthetase family. ProS type 1 subfamily. In terms of assembly, homodimer.

The protein resides in the cytoplasm. It catalyses the reaction tRNA(Pro) + L-proline + ATP = L-prolyl-tRNA(Pro) + AMP + diphosphate. In terms of biological role, catalyzes the attachment of proline to tRNA(Pro) in a two-step reaction: proline is first activated by ATP to form Pro-AMP and then transferred to the acceptor end of tRNA(Pro). As ProRS can inadvertently accommodate and process non-cognate amino acids such as alanine and cysteine, to avoid such errors it has two additional distinct editing activities against alanine. One activity is designated as 'pretransfer' editing and involves the tRNA(Pro)-independent hydrolysis of activated Ala-AMP. The other activity is designated 'posttransfer' editing and involves deacylation of mischarged Ala-tRNA(Pro). The misacylated Cys-tRNA(Pro) is not edited by ProRS. This Acinetobacter baumannii (strain ATCC 17978 / DSM 105126 / CIP 53.77 / LMG 1025 / NCDC KC755 / 5377) protein is Proline--tRNA ligase.